The primary structure comprises 527 residues: Berberine bridge enzyme-like 14 (527 aa).

The first 23 residues, 1–23 (MKSSTTQTLIFTVFLLLIPTSFA), serve as a signal peptide directing secretion. Residues cysteine 35 and cysteine 96 are joined by a disulfide bond. Asparagine 47, asparagine 72, asparagine 161, asparagine 296, asparagine 328, asparagine 396, and asparagine 481 each carry an N-linked (GlcNAc...) asparagine glycan. The FAD-binding PCMH-type domain occupies 74 to 249 (TTRKPVAIVA…LAWKIKLVPV (176 aa)). The segment at residues 111-174 (HDYDGMSYLS…NLRGFPAGIC (64 aa)) is a cross-link (6-(S-cysteinyl)-8alpha-(pros-histidyl)-FAD (His-Cys)).

Belongs to the oxygen-dependent FAD-linked oxidoreductase family. FAD serves as cofactor. Post-translationally, the FAD cofactor is bound via a bicovalent 6-S-cysteinyl, 8alpha-N1-histidyl FAD linkage.

It is found in the secreted. The protein resides in the cell wall. The protein is Berberine bridge enzyme-like 14 of Arabidopsis thaliana (Mouse-ear cress).